A 334-amino-acid polypeptide reads, in one-letter code: Malate dehydrogenase 2 (334 aa).

Position 12–18 (12–18 (GAAGRVA)) interacts with NAD(+). Substrate is bound by residues arginine 93 and arginine 99. NAD(+)-binding positions include asparagine 106, glutamine 113, and 130–132 (VGN). The substrate site is built by asparagine 132 and arginine 166. Residue histidine 191 is the Proton acceptor of the active site.

It belongs to the LDH/MDH superfamily. MDH type 2 family.

The catalysed reaction is (S)-malate + NAD(+) = oxaloacetate + NADH + H(+). In terms of biological role, catalyzes the reversible oxidation of malate to oxaloacetate. This Albidiferax ferrireducens (strain ATCC BAA-621 / DSM 15236 / T118) (Rhodoferax ferrireducens) protein is Malate dehydrogenase 2.